Reading from the N-terminus, the 123-residue chain is MNGSNMANTSPSVKSKEDQGLSGHDEKENPFAEYMWMENEEDFNRQVEEELQEQDFLDRCFQEMLDEEDQDWFIPSRDLPQAMGQLQQQLNGLSVSEGHDSEDILSKSNLNPDAKEFIPGEKY.

N-acetylmethionine is present on methionine 1. Residues 1-13 (MNGSNMANTSPSV) are compositionally biased toward polar residues. Disordered stretches follow at residues 1–30 (MNGS…KENP) and 91–123 (NGLS…GEKY). Composition is skewed to basic and acidic residues over residues 14–30 (KSKE…KENP) and 113–123 (DAKEFIPGEKY).

This sequence belongs to the PAIP2 family. As to quaternary structure, interacts (via central acidic portion and C-terminus) with PABPC1 (via the second and third RRM domains and the C-terminus). Ubiquitinated in vitro. As to expression, expressed in brain, cervix, heart, liver, ovary, kidney, prostate and testis.

Functionally, inhibits translation of capped and polyadenylated mRNAs by displacing PABPC1 from the poly(A) tail. This is Polyadenylate-binding protein-interacting protein 2B (PAIP2B) from Homo sapiens (Human).